The chain runs to 314 residues: tRNA dimethylallyltransferase 1 (314 aa).

An ATP-binding site is contributed by 17 to 24; it reads GPTAAGKT. A substrate-binding site is contributed by 19–24; the sequence is TAAGKT. The interaction with substrate tRNA stretch occupies residues 42–45; it reads DSRQ.

This sequence belongs to the IPP transferase family. Monomer. The cofactor is Mg(2+).

The enzyme catalyses adenosine(37) in tRNA + dimethylallyl diphosphate = N(6)-dimethylallyladenosine(37) in tRNA + diphosphate. In terms of biological role, catalyzes the transfer of a dimethylallyl group onto the adenine at position 37 in tRNAs that read codons beginning with uridine, leading to the formation of N6-(dimethylallyl)adenosine (i(6)A). This chain is tRNA dimethylallyltransferase 1, found in Syntrophotalea carbinolica (strain DSM 2380 / NBRC 103641 / GraBd1) (Pelobacter carbinolicus).